Consider the following 124-residue polypeptide: Small ribosomal subunit protein uS12 (124 aa).

Asp-89 bears the 3-methylthioaspartic acid mark.

This sequence belongs to the universal ribosomal protein uS12 family. Part of the 30S ribosomal subunit. Contacts proteins S8 and S17. May interact with IF1 in the 30S initiation complex.

Functionally, with S4 and S5 plays an important role in translational accuracy. Interacts with and stabilizes bases of the 16S rRNA that are involved in tRNA selection in the A site and with the mRNA backbone. Located at the interface of the 30S and 50S subunits, it traverses the body of the 30S subunit contacting proteins on the other side and probably holding the rRNA structure together. The combined cluster of proteins S8, S12 and S17 appears to hold together the shoulder and platform of the 30S subunit. The sequence is that of Small ribosomal subunit protein uS12 from Photobacterium profundum (strain SS9).